The sequence spans 161 residues: Transcription antitermination protein NusB (161 aa).

Belongs to the NusB family.

Its function is as follows. Involved in transcription antitermination. Required for transcription of ribosomal RNA (rRNA) genes. Binds specifically to the boxA antiterminator sequence of the ribosomal RNA (rrn) operons. In Syntrophus aciditrophicus (strain SB), this protein is Transcription antitermination protein NusB.